The following is a 424-amino-acid chain: Endoglucanase 1 (424 aa).

Residues 1–18 (MAKFSALCSLALLGLATA) form the signal peptide. 9 disulfide bridges follow: C35–C41, C68–C90, C80–C86, C156–C384, C188–C211, C192–C210, C231–C250, C239–C244, and C255–C331. N76 is a glycosylation site (N-linked (GlcNAc...) asparagine). The active-site Nucleophile is E213. E218 (proton donor) is an active-site residue. 2 N-linked (GlcNAc...) asparagine glycosylation sites follow: N271 and N385.

Belongs to the glycosyl hydrolase 7 (cellulase C) family. As to quaternary structure, monomer.

The protein localises to the secreted. The enzyme catalyses Endohydrolysis of (1-&gt;4)-beta-D-glucosidic linkages in cellulose, lichenin and cereal beta-D-glucans.. Functionally, endoglucanase that is involved in the biological conversion of cellulose to glucose. Hydrolyzes internal beta-1,4-glucosidic bonds. This chain is Endoglucanase 1, found in Pyricularia oryzae (strain 70-15 / ATCC MYA-4617 / FGSC 8958) (Rice blast fungus).